The following is a 160-amino-acid chain: Transcription elongation factor GreA 2 (160 aa).

Residues M9–Q73 are a coiled coil.

The protein belongs to the GreA/GreB family.

Its function is as follows. Necessary for efficient RNA polymerase transcription elongation past template-encoded arresting sites. The arresting sites in DNA have the property of trapping a certain fraction of elongating RNA polymerases that pass through, resulting in locked ternary complexes. Cleavage of the nascent transcript by cleavage factors such as GreA or GreB allows the resumption of elongation from the new 3'terminus. GreA releases sequences of 2 to 3 nucleotides. This is Transcription elongation factor GreA 2 from Lactiplantibacillus plantarum (strain ATCC BAA-793 / NCIMB 8826 / WCFS1) (Lactobacillus plantarum).